A 225-amino-acid polypeptide reads, in one-letter code: NAD(P)H-quinone oxidoreductase subunit K, chloroplastic (225 aa).

Residues Cys43, Cys44, Cys108, and Cys139 each coordinate [4Fe-4S] cluster.

The protein belongs to the complex I 20 kDa subunit family. As to quaternary structure, NDH is composed of at least 16 different subunits, 5 of which are encoded in the nucleus. [4Fe-4S] cluster is required as a cofactor.

The protein localises to the plastid. It is found in the chloroplast thylakoid membrane. The catalysed reaction is a plastoquinone + NADH + (n+1) H(+)(in) = a plastoquinol + NAD(+) + n H(+)(out). It carries out the reaction a plastoquinone + NADPH + (n+1) H(+)(in) = a plastoquinol + NADP(+) + n H(+)(out). Its function is as follows. NDH shuttles electrons from NAD(P)H:plastoquinone, via FMN and iron-sulfur (Fe-S) centers, to quinones in the photosynthetic chain and possibly in a chloroplast respiratory chain. The immediate electron acceptor for the enzyme in this species is believed to be plastoquinone. Couples the redox reaction to proton translocation, and thus conserves the redox energy in a proton gradient. In Platanus occidentalis (Sycamore), this protein is NAD(P)H-quinone oxidoreductase subunit K, chloroplastic.